A 193-amino-acid polypeptide reads, in one-letter code: Flagellin B1 (193 aa).

Residues 1 to 12 (MFEFITDEDERG) constitute a propeptide that is removed on maturation.

The protein belongs to the archaeal flagellin family. Glycosylated.

It is found in the archaeal flagellum. In terms of biological role, flagellin is the subunit protein which polymerizes to form the filaments of archaeal flagella. The protein is Flagellin B1 (flaB1) of Halobacterium salinarum (strain ATCC 700922 / JCM 11081 / NRC-1) (Halobacterium halobium).